Consider the following 557-residue polypeptide: Carotenoid-cleaving dioxygenase, mitochondrial (557 aa).

The Fe cation site is built by His-203, His-263, His-334, and His-551.

This sequence belongs to the carotenoid oxygenase family. The cofactor is Fe(2+).

The protein resides in the mitochondrion. It carries out the reaction all-trans-beta-carotene + O2 = beta-ionone + all-trans-10'-apo-beta-carotenal. The catalysed reaction is 5-cis-lycopene + O2 = 5-cis-10'-apo-lycopenal + (3E,5E)-6,10-dimethylundeca-3,5,9-trien-2-one. It catalyses the reaction 13-cis-lycopene + O2 = 13-cis-10'-apo-lycopenal + (3E,5E)-6,10-dimethylundeca-3,5,9-trien-2-one. The enzyme catalyses lutein + O2 = (3R,6R)-hydroxy-alpha-ionone + (3R)-3-hydroxy-10'-apo-beta-carotenal. It carries out the reaction lutein + O2 = (3R,6R)-3-hydroxy-10'-apo-alpha-carotenal + (3R)-hydroxy-beta-ionone. The catalysed reaction is all-trans-zeaxanthin + 2 O2 = 4,9-dimethyldodeca-2,4,6,8,10-pentaenedial + 2 (3R)-hydroxy-beta-ionone. It catalyses the reaction all-trans-zeaxanthin + O2 = (3R)-3-hydroxy-10'-apo-beta-carotenal + (3R)-hydroxy-beta-ionone. The enzyme catalyses beta-cryptoxanthin + O2 = all-trans-10'-apo-beta-carotenal + (3R)-hydroxy-beta-ionone. It carries out the reaction all-trans-10'-apo-beta-carotenal + O2 = beta-ionone + 4,9-dimethyldodeca-2,4,6,8,10-pentaenedial. The catalysed reaction is (3R)-3-hydroxy-10'-apo-beta-carotenal + O2 = 4,9-dimethyldodeca-2,4,6,8,10-pentaenedial + (3R)-hydroxy-beta-ionone. It catalyses the reaction (3R,6R)-3-hydroxy-10'-apo-alpha-carotenal + O2 = (3R,6R)-hydroxy-alpha-ionone + 4,9-dimethyldodeca-2,4,6,8,10-pentaenedial. Functionally, broad specificity mitochondrial dioxygenase that mediates the asymmetric oxidative cleavage of carotenoids. Cleaves carotenes (pure hydrocarbon carotenoids) such as all-trans-beta-carotene and lycopene as well as xanthophylls (oxygenated carotenoids) such as zeaxanthin, lutein and beta-cryptoxanthin at both the 9,10 and the 9',10' carbon-carbon double bond. Through its function in carotenoids metabolism regulates oxidative stress and the production of important signaling molecules. In Pongo abelii (Sumatran orangutan), this protein is Carotenoid-cleaving dioxygenase, mitochondrial.